A 965-amino-acid chain; its full sequence is Valine--tRNA ligase (965 aa).

The span at 1 to 12 (MEKTPATQTQAE) shows a compositional bias: polar residues. A disordered region spans residues 1–23 (MEKTPATQTQAEPSLDKTYNPKE). The 'HIGH' region signature appears at 56–66 (PNVTGSLHMGH). A 'KMSKS' region motif is present at residues 568-572 (KMSKS). Lys-571 is a binding site for ATP. Residues 893 to 960 (MAGLVDKEAE…SKEKLLAQKE (68 aa)) are a coiled coil.

It belongs to the class-I aminoacyl-tRNA synthetase family. ValS type 1 subfamily. As to quaternary structure, monomer.

It is found in the cytoplasm. It carries out the reaction tRNA(Val) + L-valine + ATP = L-valyl-tRNA(Val) + AMP + diphosphate. In terms of biological role, catalyzes the attachment of valine to tRNA(Val). As ValRS can inadvertently accommodate and process structurally similar amino acids such as threonine, to avoid such errors, it has a 'posttransfer' editing activity that hydrolyzes mischarged Thr-tRNA(Val) in a tRNA-dependent manner. This Photorhabdus laumondii subsp. laumondii (strain DSM 15139 / CIP 105565 / TT01) (Photorhabdus luminescens subsp. laumondii) protein is Valine--tRNA ligase.